A 309-amino-acid chain; its full sequence is Homoserine O-succinyltransferase (309 aa).

C142 (acyl-thioester intermediate) is an active-site residue. 2 residues coordinate substrate: K163 and S192. H235 serves as the catalytic Proton acceptor. E237 is a catalytic residue. A substrate-binding site is contributed by R249.

The protein belongs to the MetA family. Homodimer.

It localises to the cytoplasm. The enzyme catalyses L-homoserine + succinyl-CoA = O-succinyl-L-homoserine + CoA. The protein operates within amino-acid biosynthesis; L-methionine biosynthesis via de novo pathway; O-succinyl-L-homoserine from L-homoserine: step 1/1. Its function is as follows. Transfers a succinyl group from succinyl-CoA to L-homoserine, forming succinyl-L-homoserine. The sequence is that of Homoserine O-succinyltransferase from Salmonella arizonae (strain ATCC BAA-731 / CDC346-86 / RSK2980).